The following is a 354-amino-acid chain: UDP-N-acetylglucosamine--N-acetylmuramyl-(pentapeptide) pyrophosphoryl-undecaprenol N-acetylglucosamine transferase (354 aa).

UDP-N-acetyl-alpha-D-glucosamine is bound by residues S196 and Q288.

It belongs to the glycosyltransferase 28 family. MurG subfamily.

It is found in the cell membrane. The enzyme catalyses Mur2Ac(oyl-L-Ala-gamma-D-Glu-L-Lys-D-Ala-D-Ala)-di-trans,octa-cis-undecaprenyl diphosphate + UDP-N-acetyl-alpha-D-glucosamine = beta-D-GlcNAc-(1-&gt;4)-Mur2Ac(oyl-L-Ala-gamma-D-Glu-L-Lys-D-Ala-D-Ala)-di-trans,octa-cis-undecaprenyl diphosphate + UDP + H(+). It participates in cell wall biogenesis; peptidoglycan biosynthesis. Functionally, cell wall formation. Catalyzes the transfer of a GlcNAc subunit on undecaprenyl-pyrophosphoryl-MurNAc-pentapeptide (lipid intermediate I) to form undecaprenyl-pyrophosphoryl-MurNAc-(pentapeptide)GlcNAc (lipid intermediate II). This chain is UDP-N-acetylglucosamine--N-acetylmuramyl-(pentapeptide) pyrophosphoryl-undecaprenol N-acetylglucosamine transferase, found in Streptococcus suis (strain 98HAH33).